Consider the following 280-residue polypeptide: Apoptosis regulator ced-9 (280 aa).

Residues 33 to 59 are disordered; the sequence is GTEPTDFGINSDAQDLPSPSRQASTRR. The span at 43–59 shows a compositional bias: polar residues; it reads SDAQDLPSPSRQASTRR. Positions 80 to 99 match the BH4 motif; that stretch reads IEGFVVDYFTHRIRQNGMEW. A BH1 motif is present at residues 160 to 179; the sequence is QTDQCPMSYGRLIGLISFGG. The BH2 motif lies at 213–229; it reads NWKEHNRSWDDFMTLGK.

It belongs to the Bcl-2 family. As to quaternary structure, interacts with asymmetric homodimer ced-4; the interaction sequesters ced-4. Interacts with egl-1; the interaction results in ced-4 release. Interacts with dre-1; the interaction inhibits ced-9 activity, either directly or indirectly. Interacts with dct-1. May form a complex composed of ced-9, ced-4 and mac-1. Interacts with dynamin-related protein drp-1 (via residues 280-502); the interaction is enhanced by GTP rather than GDP; the interaction is probably direct and may occur at the mitochondrion. Interaction with drp-1 may be enhanced by interaction of ced-9 with egl-1, but not with ced-4. A ced-9/egl-1 complex may recruit drp-1 to the mitochondrial surface. Interacts with fzo-1; interaction may be suppressed by interaction of ced-9 with egl-1.

It localises to the perikaryon. Its subcellular location is the synapse. The protein localises to the endomembrane system. It is found in the mitochondrion membrane. The protein resides in the cytoplasm. Functionally, plays a major role in programmed cell death (PCD, apoptosis). egl-1 binds to and directly inhibits the activity of ced-9, releasing the cell death activator ced-4 from a ced-9/ced-4 containing protein complex and allowing ced-4 to activate the cell-killing caspase ced-3. During larval development, required for the elimination of transient presynaptic components downstream of egl-1 and upstream of ced-4 and ced-3 apoptotic pathway. Has been shown in one study to be dispensable in mitochondrial dynamics and morphology during early embryonic development. However, another study shows that a egl-1/ced-9 containing complex may promote drp-1-dependent mitochondrial fission. This chain is Apoptosis regulator ced-9 (ced-9), found in Caenorhabditis elegans.